A 191-amino-acid polypeptide reads, in one-letter code: uncharacterized protein (191 aa).

The disordered stretch occupies residues 52 to 112; it reads NKQENQTESS…TNKDTNIETN (61 aa). Polar residues predominate over residues 57–70; the sequence is QTESSDLNNTDSLV. The span at 71 to 94 shows a compositional bias: low complexity; it reads DSNSDNQTNTTDTSTNNVENLNEN. Residues 138–172 are a coiled coil; sequence QDKISDTERIRFLEEKVSKLERKIRTLSLQMTKIS.

This is an uncharacterized protein from Acanthamoeba polyphaga mimivirus (APMV).